A 151-amino-acid polypeptide reads, in one-letter code: UPF0208 membrane protein YE1335 (151 aa).

A run of 2 helical transmembrane segments spans residues 46–66 (FGIR…IALG) and 69–89 (LGPA…GLWW).

It belongs to the UPF0208 family.

Its subcellular location is the cell inner membrane. This chain is UPF0208 membrane protein YE1335, found in Yersinia enterocolitica serotype O:8 / biotype 1B (strain NCTC 13174 / 8081).